Reading from the N-terminus, the 402-residue chain is Zinc finger CCHC domain-containing protein 12 (402 aa).

Residues isoleucine 308–arginine 341 are disordered. Residues proline 311–serine 322 are compositionally biased toward polar residues. The CCHC-type zinc finger occupies isoleucine 345 to asparagine 362.

This sequence belongs to the ZCCHC12 family. In terms of assembly, interacts with SMAD1 and CREB-binding protein (CBP). Forms a protein-DNA complex through its association with SMAD1.

Its function is as follows. Transcriptional coactivator in the bone morphogenetic protein (BMP)-signaling pathway. It positively modulates BMP signaling by interacting with SMAD1 and associating with CBP in the transcription complex. It contributes to the BMP-induced enhancement of cholinergic-neuron-specific gene expression. The polypeptide is Zinc finger CCHC domain-containing protein 12 (ZCCHC12) (Homo sapiens (Human)).